The chain runs to 212 residues: Phosphatidylserine decarboxylase proenzyme (212 aa).

Ser182 serves as the catalytic Schiff-base intermediate with substrate; via pyruvic acid. Ser182 is subject to Pyruvic acid (Ser); by autocatalysis.

It belongs to the phosphatidylserine decarboxylase family. PSD-A subfamily. As to quaternary structure, heterodimer of a large membrane-associated beta subunit and a small pyruvoyl-containing alpha subunit. Pyruvate is required as a cofactor. Post-translationally, is synthesized initially as an inactive proenzyme. Formation of the active enzyme involves a self-maturation process in which the active site pyruvoyl group is generated from an internal serine residue via an autocatalytic post-translational modification. Two non-identical subunits are generated from the proenzyme in this reaction, and the pyruvate is formed at the N-terminus of the alpha chain, which is derived from the carboxyl end of the proenzyme. The post-translation cleavage follows an unusual pathway, termed non-hydrolytic serinolysis, in which the side chain hydroxyl group of the serine supplies its oxygen atom to form the C-terminus of the beta chain, while the remainder of the serine residue undergoes an oxidative deamination to produce ammonia and the pyruvoyl prosthetic group on the alpha chain.

It is found in the cell membrane. The catalysed reaction is a 1,2-diacyl-sn-glycero-3-phospho-L-serine + H(+) = a 1,2-diacyl-sn-glycero-3-phosphoethanolamine + CO2. The protein operates within phospholipid metabolism; phosphatidylethanolamine biosynthesis; phosphatidylethanolamine from CDP-diacylglycerol: step 2/2. Its function is as follows. Catalyzes the formation of phosphatidylethanolamine (PtdEtn) from phosphatidylserine (PtdSer). In Paraburkholderia phymatum (strain DSM 17167 / CIP 108236 / LMG 21445 / STM815) (Burkholderia phymatum), this protein is Phosphatidylserine decarboxylase proenzyme.